The primary structure comprises 430 residues: Gamma-glutamyl phosphate reductase (430 aa).

It belongs to the gamma-glutamyl phosphate reductase family.

The protein localises to the cytoplasm. It carries out the reaction L-glutamate 5-semialdehyde + phosphate + NADP(+) = L-glutamyl 5-phosphate + NADPH + H(+). It participates in amino-acid biosynthesis; L-proline biosynthesis; L-glutamate 5-semialdehyde from L-glutamate: step 2/2. In terms of biological role, catalyzes the NADPH-dependent reduction of L-glutamate 5-phosphate into L-glutamate 5-semialdehyde and phosphate. The product spontaneously undergoes cyclization to form 1-pyrroline-5-carboxylate. The polypeptide is Gamma-glutamyl phosphate reductase (Methylococcus capsulatus (strain ATCC 33009 / NCIMB 11132 / Bath)).